The following is a 217-amino-acid chain: Deoxyribose-phosphate aldolase 1 (217 aa).

D89 acts as the Proton donor/acceptor in catalysis. K151 serves as the catalytic Schiff-base intermediate with acetaldehyde. Residue K180 is the Proton donor/acceptor of the active site.

It belongs to the DeoC/FbaB aldolase family. DeoC type 1 subfamily.

The protein localises to the cytoplasm. It carries out the reaction 2-deoxy-D-ribose 5-phosphate = D-glyceraldehyde 3-phosphate + acetaldehyde. The protein operates within carbohydrate degradation; 2-deoxy-D-ribose 1-phosphate degradation; D-glyceraldehyde 3-phosphate and acetaldehyde from 2-deoxy-alpha-D-ribose 1-phosphate: step 2/2. Its function is as follows. Catalyzes a reversible aldol reaction between acetaldehyde and D-glyceraldehyde 3-phosphate to generate 2-deoxy-D-ribose 5-phosphate. This is Deoxyribose-phosphate aldolase 1 from Cutibacterium acnes (strain DSM 16379 / KPA171202) (Propionibacterium acnes).